Consider the following 594-residue polypeptide: MDRMTEDALRLNLLKRSLDPADERDDVLAKRLKMEGHEAMERLKMLALLKRKDLANLEVPHELPTKQDGSGVKGYEEKLNGNLRPHGDNNRTAGRPGKENINDEPVDMSARRSEPDRGRLTPSPDIIVLSDNEASSPRSSSRMEERLKAANLEMFKGKGMEERQQLIKQLRDELRLEEARLVLLKKLRQSQLQKENVVQKTPVVQNAASIVQPSPAHVGQQGLSKLPSRPGAQGIEPQNMRTLQGHSVIRSATNTTLPHMLMSQRVIAPNPAQLQGQRGPPKPGIVRTTTPNMNPAISYQPQSSSSVPCQRTTSSAIYMNLASHIQPGTVNRVSSPLPSPSAMSDAANSQAAAKLALRKQLEKTLLEIPPPKPPAPLLHFLPSAANSEFIYMVGLEEVVQSVIDSQGKNCASLLRVEPFVCAQCRTDFTPHWKQEKNGKILCEQCMTSNQKKALKAEHTNRLKNAFVKALQQEQEIEQRLQQQAALSPTTAPAVSSVSKQETIMRHHTLRQAPQPQSSLQRGIPTSARSMLSNFAQAPQLSVPGGLLGMPGVNIAYLNTGIGGHKAPSLADRQREYLLDMIPPRSISQSISGQK.

Serine 17 carries the post-translational modification Phosphoserine. Residues lysine 33 and lysine 66 each participate in a glycyl lysine isopeptide (Lys-Gly) (interchain with G-Cter in SUMO2) cross-link. A disordered region spans residues 62–143 (ELPTKQDGSG…ASSPRSSSRM (82 aa)). Residues 74–89 (GYEEKLNGNLRPHGDN) show a composition bias toward basic and acidic residues. A Glycyl lysine isopeptide (Lys-Gly) (interchain with G-Cter in SUMO2) cross-link involves residue lysine 98. The segment covering 109-119 (SARRSEPDRGR) has biased composition (basic and acidic residues). Threonine 121 carries the post-translational modification Phosphothreonine. Phosphoserine is present on residues serine 123, serine 130, serine 135, and serine 136. Low complexity predominate over residues 130 to 140 (SDNEASSPRSS). A coiled-coil region spans residues 141–195 (SRMEERLKAANLEMFKGKGMEERQQLIKQLRDELRLEEARLVLLKKLRQSQLQKE). A Glycyl lysine isopeptide (Lys-Gly) (interchain with G-Cter in SUMO2) cross-link involves residue lysine 148. The tract at residues 166-191 (LIKQLRDELRLEEARLVLLKKLRQSQ) is CR1; interaction with MBD2 and MBD3. Lysine 200 is covalently cross-linked (Glycyl lysine isopeptide (Lys-Gly) (interchain with G-Cter in SUMO2)). Position 209 is a phosphoserine (serine 209). A disordered region spans residues 214–237 (SPAHVGQQGLSKLPSRPGAQGIEP). Lysine 282 is covalently cross-linked (Glycyl lysine isopeptide (Lys-Gly) (interchain with G-Cter in SUMO2)). Residues serine 334, serine 339, and serine 341 each carry the phosphoserine modification. The tract at residues 341–481 (SAMSDAANSQ…QEQEIEQRLQ (141 aa)) is CR2; histone tail-binding. Glycyl lysine isopeptide (Lys-Gly) (interchain with G-Cter in SUMO2) cross-links involve residues lysine 354, lysine 455, and lysine 468. The GATA-type zinc-finger motif lies at 415-468 (RVEPFVCAQCRTDFTPHWKQEKNGKILCEQCMTSNQKKALKAEHTNRLKNAFVK). Residues 450–483 (QKKALKAEHTNRLKNAFVKALQQEQEIEQRLQQQ) are a coiled coil. Phosphoserine is present on serine 487. A Glycyl lysine isopeptide (Lys-Gly) (interchain with G-Cter in SUMO2) cross-link involves residue lysine 499.

In terms of assembly, homooligomer. Component of the nucleosome remodeling and deacetylase (NuRD) repressor complex, composed of core proteins MTA1, MTA2, MTA3, RBBP4, RBBP7, HDAC1, HDAC2, MBD2, MBD3, and peripherally associated proteins CDK2AP1, CDK2AP2, GATAD2A, GATAD2B, CHD3, CHD4 and CHD5. The exact stoichiometry of the NuRD complex is unknown, and some subunits such as MBD2 and MBD3, GATAD2A and GATAD2B, and CHD3, CHD4 and CHD5 define mutually exclusive NuRD complexes. Interacts with MBD2; this is required for the enhancement of MBD2-mediated repression and for targeting to the chromatin. Interacts with MBD3. Component of the MeCP1 histone deacetylase complex. Interacts with histone tails, including that of histones H2A, H2B, H3 and H4. Interacts with ERCC6.

The protein localises to the nucleus speckle. The protein resides in the nucleus. It is found in the chromosome. In terms of biological role, transcriptional repressor. Acts as a component of the histone deacetylase NuRD complex which participates in the remodeling of chromatin. Enhances MBD2-mediated repression. Efficient repression requires the presence of GATAD2A. Targets MBD3 to discrete loci in the nucleus. May play a role in synapse development. This Mus musculus (Mouse) protein is Transcriptional repressor p66-beta (Gatad2b).